A 522-amino-acid chain; its full sequence is Man(5)GlcNAc(2)-PP-dolichol translocation protein RFT1 (522 aa).

10 helical membrane passes run 35–55 (DVLG…LFLT), 75–95 (LLWL…YLWY), 108–128 (VLLS…FSVI), 143–165 (FAIG…LFMF), 177–197 (AQYI…YIYI), 322–342 (VVGV…PVVI), 354–374 (GGAL…INGI), 400–420 (IIHL…GFIV), 457–477 (TSIF…LFAT), and 479–499 (PGLS…ILTA).

Belongs to the RFT1 family.

The protein resides in the endoplasmic reticulum membrane. It participates in protein modification; protein glycosylation. Its function is as follows. Intramembrane glycolipid transporter that operates in the biosynthetic pathway of dolichol-linked oligosaccharides, the glycan precursors employed in protein asparagine (N)-glycosylation. The sequential addition of sugars to dolichol pyrophosphate produces dolichol-linked oligosaccharides containing fourteen sugars, including two GlcNAcs, nine mannoses and three glucoses. Once assembled, the oligosaccharide is transferred from the lipid to nascent proteins by oligosaccharyltransferases. The assembly of dolichol-linked oligosaccharides begins on the cytosolic side of the endoplasmic reticulum membrane and finishes in its lumen. RFT1 could mediate the translocation of the cytosolically oriented intermediate DolPP-GlcNAc2Man5, produced by ALG11, into the ER lumen where dolichol-linked oligosaccharides assembly continues. However, the intramembrane lipid transporter activity could not be confirmed in vitro. This is Man(5)GlcNAc(2)-PP-dolichol translocation protein RFT1 from Caenorhabditis elegans.